Here is a 308-residue protein sequence, read N- to C-terminus: E3 ubiquitin-protein ligase SINAT2 (308 aa).

The RING-type zinc finger occupies 60-96 (CPVCTNLMYPPIHQCPNGHTLCSNCKLRVQNTCPTCR). The segment at 110-303 (VAESLEVPCR…QELKLRVTGR (194 aa)) is SBD. The SIAH-type zinc finger occupies 113–173 (SLEVPCRYQN…LVVHLKDDHK (61 aa)). Cys118, Cys125, His137, Cys141, Cys148, Cys155, His167, and His172 together coordinate Zn(2+).

Belongs to the SINA (Seven in absentia) family. In terms of assembly, interacts with RAP2-2. Interacts with SINAT6. Interacts with ATG6 and TRAF1A. Interacts with WAV3. Interacts with FREE1. Interacts with ELC/VPS23A.

Its subcellular location is the endosome. The protein resides in the multivesicular body. It localises to the cytoplasmic vesicle. It is found in the autophagosome. It carries out the reaction S-ubiquitinyl-[E2 ubiquitin-conjugating enzyme]-L-cysteine + [acceptor protein]-L-lysine = [E2 ubiquitin-conjugating enzyme]-L-cysteine + N(6)-ubiquitinyl-[acceptor protein]-L-lysine.. Its pathway is protein modification; protein ubiquitination. Its function is as follows. E3 ubiquitin-protein ligase that mediates ubiquitination and subsequent proteasomal degradation of target proteins. E3 ubiquitin ligases accept ubiquitin from an E2 ubiquitin-conjugating enzyme in the form of a thioester and then directly transfers the ubiquitin to targeted substrates. It probably triggers the ubiquitin-mediated degradation of different substrates. Mediates the proteasomal-dependent degradation of ATG6, a component of the autophagosome complex. Requires TRAF1A/MUSE14 and TRAF1B/MUSE13 to target ATG6 for ubiquitination and subsequent regulation of autophagosome assembly. Modulates directly the ubiquitination and proteasomal-dependent degradation of FREE1, a component of the ESCRT-I complex. Modulates directly the ubiquitination and proteasomal-dependent degradation of ELC/VPS23A, a component of the ESCRT-I complex. This Arabidopsis thaliana (Mouse-ear cress) protein is E3 ubiquitin-protein ligase SINAT2.